Consider the following 418-residue polypeptide: Deubiquitinase and deneddylase Dub1 (418 aa).

The span at 1–11 (MLSPTNSTSKT) shows a compositional bias: polar residues. The tract at residues 1-23 (MLSPTNSTSKTAPVPPQDSSKPV) is disordered. The helical transmembrane segment at 40 to 60 (TALVVLLVVVTLGLILLFYSF) threads the bilayer. Residues 72–145 (TRPSTKEQPT…LPPKAPKPVK (74 aa)) are disordered. The segment covering 86-141 (VPLPSPPLAVPRPSTPPPPVISRPSMPPAPTPAISPPSTPSAPKPSTPPPLPPKAP) has biased composition (pro residues). Active-site residues include His288, Asp305, and Cys358.

It belongs to the peptidase C48 family.

The protein resides in the secreted. Its subcellular location is the host cell. It is found in the membrane. In terms of biological role, effector proteins function to alter host cell physiology and promote bacterial survival in host tissues. This protease possesses deubiquitinating and deneddylating activities. The sequence is that of Deubiquitinase and deneddylase Dub1 (cdu1) from Chlamydia trachomatis serovar E (strain Sweden2).